We begin with the raw amino-acid sequence, 340 residues long: Heat-inducible transcription repressor HrcA (340 aa).

This sequence belongs to the HrcA family.

Negative regulator of class I heat shock genes (grpE-dnaK-dnaJ and groELS operons). Prevents heat-shock induction of these operons. In Clavibacter michiganensis subsp. michiganensis (strain NCPPB 382), this protein is Heat-inducible transcription repressor HrcA.